The primary structure comprises 128 residues: Deoxycytidylate deaminase (128 aa).

The CMP/dCMP-type deaminase domain occupies 5–128 (DWDEYFLGIA…IERVVYPKES (124 aa)). His-81 is a binding site for Zn(2+). Glu-83 (proton donor) is an active-site residue. Zn(2+) is bound by residues Cys-107 and Cys-110.

The protein belongs to the cytidine and deoxycytidylate deaminase family.

The enzyme catalyses dCMP + H2O + H(+) = dUMP + NH4(+). The polypeptide is Deoxycytidylate deaminase (36.1) (Mycobacterium (Mycobacteriophage D29)).